The primary structure comprises 442 residues: DNA N(6)-methyladenine demethylase ALKBH1D (442 aa).

Over residues 135–144 (SMVHFDSTNP) the composition is skewed to polar residues. The tract at residues 135 to 185 (SMVHFDSTNPSSSSKSSQSQNLKIRKVRNHRNSGFKSRDQSPQRIKDPPPF) is disordered. Over residues 145-154 (SSSSKSSQSQ) the composition is skewed to low complexity. Residues 157–167 (KIRKVRNHRNS) show a composition bias toward basic residues. A compositionally biased stretch (basic and acidic residues) spans 170–183 (KSRDQSPQRIKDPP). The Fe2OG dioxygenase domain occupies 332-442 (SPDICIVNFY…GRLNLTFRHF (111 aa)). Residue 339 to 341 (NFY) participates in 2-oxoglutarate binding. His350, Asp352, and His410 together coordinate Fe cation. A 2-oxoglutarate-binding site is contributed by 434–440 (RLNLTFR).

It belongs to the alkB family. Requires Fe(2+) as cofactor. As to expression, expressed at low levels in roots, seedlings and rosette leaves, but barely in cauline leaves, stems, siliques and flowers.

The protein resides in the nucleus. Its subcellular location is the cytoplasm. The enzyme catalyses an N(6)-methyl-2'-deoxyadenosine in DNA + 2-oxoglutarate + O2 = a 2'-deoxyadenosine in DNA + formaldehyde + succinate + CO2. Dioxygenase that catalyzes DNA N(6)-methyladenine (6 mA) demethylation to modulate gene expression and regulate seed germination. In Arabidopsis thaliana (Mouse-ear cress), this protein is DNA N(6)-methyladenine demethylase ALKBH1D.